We begin with the raw amino-acid sequence, 344 residues long: tRNA N6-adenosine threonylcarbamoyltransferase (344 aa).

Fe cation-binding residues include histidine 111 and histidine 115. Residues 133–137, aspartate 166, glycine 179, and asparagine 283 contribute to the substrate site; that span reads LVSGG. Aspartate 311 contacts Fe cation.

This sequence belongs to the KAE1 / TsaD family. It depends on Fe(2+) as a cofactor.

It localises to the cytoplasm. The catalysed reaction is L-threonylcarbamoyladenylate + adenosine(37) in tRNA = N(6)-L-threonylcarbamoyladenosine(37) in tRNA + AMP + H(+). Functionally, required for the formation of a threonylcarbamoyl group on adenosine at position 37 (t(6)A37) in tRNAs that read codons beginning with adenine. Is involved in the transfer of the threonylcarbamoyl moiety of threonylcarbamoyl-AMP (TC-AMP) to the N6 group of A37, together with TsaE and TsaB. TsaD likely plays a direct catalytic role in this reaction. This is tRNA N6-adenosine threonylcarbamoyltransferase from Orientia tsutsugamushi (strain Boryong) (Rickettsia tsutsugamushi).